The following is a 293-amino-acid chain: Acetylglutamate kinase (293 aa).

Residues 60–61 (GG), Arg82, and Asn188 each bind substrate.

The protein belongs to the acetylglutamate kinase family. ArgB subfamily.

The protein resides in the cytoplasm. The enzyme catalyses N-acetyl-L-glutamate + ATP = N-acetyl-L-glutamyl 5-phosphate + ADP. It participates in amino-acid biosynthesis; L-arginine biosynthesis; N(2)-acetyl-L-ornithine from L-glutamate: step 2/4. In terms of biological role, catalyzes the ATP-dependent phosphorylation of N-acetyl-L-glutamate. The polypeptide is Acetylglutamate kinase (Methanothermobacter thermautotrophicus (strain ATCC 29096 / DSM 1053 / JCM 10044 / NBRC 100330 / Delta H) (Methanobacterium thermoautotrophicum)).